The sequence spans 422 residues: Interleukin-11 receptor subunit alpha (422 aa).

The first 22 residues, 1–22 (MSSSCSGLSRVLVAVATALVSA), serve as a signal peptide directing secretion. Residues 24 to 370 (SPCPQAWGPP…DSVEQVAVLA (347 aa)) are Extracellular-facing. Positions 27-110 (PQAWGPPGVQ…LGGTVTLQLG (84 aa)) constitute an Ig-like C2-type domain. Disulfide bonds link Cys48/Cys94, Cys120/Cys130, and Cys170/Cys180. Fibronectin type-III domains lie at 112 to 219 (PPAR…LRPD) and 220 to 317 (PPQG…TPST). Asn127 carries an N-linked (GlcNAc...) asparagine glycan. Asn194 is a glycosylation site (N-linked (GlcNAc...) asparagine). The WSXWS motif motif lies at 304–308 (WSTWS). The tract at residues 335–355 (EVEPQVDSPAPPRPSLQPHPR) is disordered. Residues 371 to 391 (SLGILSFLGLVAGALALGLWL) traverse the membrane as a helical segment. Residues 392–422 (RLRRGGKDGSPKPGFLASVIPVDRRPGAPNL) are Cytoplasmic-facing. Residues 398–422 (KDGSPKPGFLASVIPVDRRPGAPNL) form a disordered region. Over residues 413 to 422 (VDRRPGAPNL) the composition is skewed to basic and acidic residues.

It belongs to the type I cytokine receptor family. Type 3 subfamily. As to quaternary structure, on IL11 binding, forms a multimer complex with IL6ST/gp130. Post-translationally, a short soluble form is also released from the membrane by proteolysis. The sIL11RA is formed either by limited proteolysis of membrane-bound receptors, a process referred to as ectodomain shedding, or directly secreted from the cells after alternative mRNA splicing. mIL11RA is cleaved by the proteases ADAM10, ELANE and PRTN3. As to expression, expressed in a number of cell lines, including the myelogenous leukemia cell line K-562, the megakaryocytic leukemia cell line M-07e, the erythroleukemia cell line TF-1, and the osteosarcoma cell lines, MG-63 and SaOS-2. Also expressed in normal and malignant prostate epithelial cell lines. Expression levels are increased in prostate carcinoma.

It is found in the membrane. It localises to the secreted. In terms of biological role, receptor for interleukin-11 (IL11). The receptor systems for IL6, LIF, OSM, CNTF, IL11 and CT1 can utilize IL6ST for initiating signal transmission. The IL11/IL11RA/IL6ST complex may be involved in the control of proliferation and/or differentiation of skeletogenic progenitor or other mesenchymal cells. Essential for the normal development of craniofacial bones and teeth. Restricts suture fusion and tooth number. Functionally, soluble form of IL11 receptor (sIL11RA) that acts as an agonist of IL11 activity. The IL11:sIL11RA complex binds to IL6ST/gp130 on cell surfaces and induces signaling also on cells that do not express membrane-bound IL11RA in a process called IL11 trans-signaling. This chain is Interleukin-11 receptor subunit alpha, found in Homo sapiens (Human).